Here is a 413-residue protein sequence, read N- to C-terminus: Multidrug resistance protein MdtA (413 aa).

The N-terminal stretch at 1 to 20 (MKGSNTFRWAIAIGVVVAAA) is a signal peptide. Disordered stretches follow at residues 31 to 57 (SPTA…RDGP) and 392 to 413 (PQTT…GARA). The span at 397–413 (ADEKSPSRHEGQKGARA) shows a compositional bias: basic and acidic residues.

Belongs to the membrane fusion protein (MFP) (TC 8.A.1) family. Part of a tripartite efflux system composed of MdtA, MdtB and MdtC.

The protein localises to the cell inner membrane. The sequence is that of Multidrug resistance protein MdtA from Salmonella heidelberg (strain SL476).